The chain runs to 802 residues: Outer membrane usher protein CssD (802 aa).

Belongs to the fimbrial export usher family.

The protein resides in the cell outer membrane. Functionally, involved in the export and assembly of C6 fimbrial subunits across the outer membrane. The protein is Outer membrane usher protein CssD (cssD) of Escherichia coli.